We begin with the raw amino-acid sequence, 551 residues long: Protein GZF3 (551 aa).

Residues 17-43 form a disordered region; the sequence is DNVFEPKSSENLNSLNQSEEEGHIGRW. Residues 131–155 form a GATA-type zinc finger; sequence CKNCLTSTTPLWRRDEHGAMLCNAC. Disordered stretches follow at residues 212-260, 379-400, and 467-490; these read GRKA…SATK, LAPTSSRTTDSNPSEVPNQIRS, and SISNSVSSSDVSGRKFENHPAKDL. Residues 228–239 show a composition bias toward polar residues; that stretch reads SQLLMGTSSTAK. Residues 244-254 show a composition bias toward basic and acidic residues; it reads PKTESKERSDS. The span at 388 to 400 shows a compositional bias: polar residues; sequence DSNPSEVPNQIRS. A compositionally biased stretch (low complexity) spans 467–477; it reads SISNSVSSSDV. Residues 478 to 490 are compositionally biased toward basic and acidic residues; it reads SGRKFENHPAKDL.

Its subcellular location is the nucleus. The chain is Protein GZF3 (GZF3) from Saccharomyces cerevisiae (strain ATCC 204508 / S288c) (Baker's yeast).